The chain runs to 101 residues: Large ribosomal subunit protein uL24 (101 aa).

This sequence belongs to the universal ribosomal protein uL24 family. As to quaternary structure, part of the 50S ribosomal subunit.

One of two assembly initiator proteins, it binds directly to the 5'-end of the 23S rRNA, where it nucleates assembly of the 50S subunit. In terms of biological role, one of the proteins that surrounds the polypeptide exit tunnel on the outside of the subunit. The polypeptide is Large ribosomal subunit protein uL24 (Borrelia garinii subsp. bavariensis (strain ATCC BAA-2496 / DSM 23469 / PBi) (Borreliella bavariensis)).